The primary structure comprises 131 residues: Large ribosomal subunit protein bL17 (131 aa).

This sequence belongs to the bacterial ribosomal protein bL17 family. In terms of assembly, part of the 50S ribosomal subunit. Contacts protein L32.

This is Large ribosomal subunit protein bL17 from Burkholderia mallei (strain NCTC 10229).